The sequence spans 137 residues: Profilin-3 (137 aa).

It belongs to the profilin family. Interacts with ACTRT3. In terms of tissue distribution, testis specific.

It localises to the cytoplasm. Its subcellular location is the cytoskeleton. The protein resides in the nucleus. In terms of biological role, binds to actin and affects the structure of the cytoskeleton. Slightly reduces actin polymerization. Binds to poly-L-proline, phosphatidylinositol 3-phosphate (PtdIns(3)P), phosphatidylinositol 4,5-bisphosphate (PtdIns(4,5)P2) and phosphatidylinositol 4-phosphate (PtdIns(4)P). May be involved in spermatogenesis. The protein is Profilin-3 (PFN3) of Homo sapiens (Human).